The chain runs to 356 residues: Peptidyl-prolyl isomerase CWC27 (356 aa).

The 201-residue stretch at 5-205 folds into the PPIase cyclophilin-type domain; it reads TTAKVVLTTT…KPKRKLQVNH (201 aa). Disordered regions lie at residues 172–214, 234–266, and 279–331; these read KAGA…EEPV, NVAKKPKVEASAEQPEPAAVQATTTHHVQDAED, and LEKF…EDDD. The span at 181-192 shows a compositional bias: basic and acidic residues; the sequence is AESRENKSGSRD. Residues 193–202 are compositionally biased toward basic residues; the sequence is RPKKPKRKLQ. Residues 279 to 294 are compositionally biased toward basic and acidic residues; it reads LEKFRNMSRTKPDTKP.

It belongs to the cyclophilin-type PPIase family. CWC27 subfamily. Associated with the spliceosome.

The protein localises to the cytoplasm. It is found in the nucleus. It carries out the reaction [protein]-peptidylproline (omega=180) = [protein]-peptidylproline (omega=0). Its function is as follows. PPIases accelerate the folding of proteins. It catalyzes the cis-trans isomerization of proline imidic peptide bonds in oligopeptides. Involved in pre-mRNA splicing. This is Peptidyl-prolyl isomerase CWC27 (CWC27) from Yarrowia lipolytica (strain CLIB 122 / E 150) (Yeast).